Consider the following 2467-residue polypeptide: MKVTVDVEADSPFLKALQKAFPAFEVESQQVTPNDHANARAFSHLATKLIEQEVPTGVTILDVGSAPARRLMSDHTYHCICPMKSAEDPERLANYARKLAKASGTVLDKNVSGKITDLQDVMATPDLESPTFCLHTDETCRTRAEVAVYQDVYAVHAPTSLYHQAIKGVRTAYWIGFDTTPFMFEALAGAYPAYSTNWADEQVLQARNIGLCATGLSEGRRGKLSIMRKKCLRPSDRVMFSVGSTLYTESRKLLRSWHLPSVFHLKGKNSFTCRCDTVVSCEGYVVKKITISPGIYGKTVDYAVTHHAEGFLMCKITDTVRGERVSFPVCTYVPATICDQMTGILATDVTPEDAQKLLVGLNQRIVVNGRTQRNTNTMKNYLLPVVAQAFSKWAREARADMEDEKPLGTRERTLTCCCLWAFKSHKIHTMYKRPETQTIVKVPSTFDSFVIPSLWSSSLSMGIRQRIKLLLSARMAQGLPYSGDRTEARAAEEEEKEVQEAELTRAALPPLVSGSCADDIAQVDVEELTFRAGAGVVETPRNALKVTPQAHDHLIGSYLILSPQTVLKSEKLAPIHPLAEQVTVMTHSGRSGRYPVDKYDGRVLIPTGAAIPVSEFQALSESATMVYNEREFINRKLHHIALYGPALNTDEESYEKVRAERAETEYVFDVDKKACIKKEEASGLVLTGDLINPPFHEFAYEGLKIRPAAPYHTTIIGVFGVPGSGKSAIIKNMVTTRDLVASGKKENCQEIMNDVKRQRGLDVTARTVDSILLNGCKKGVENLYVDEAFACHSGTLLALIALVRPSGKVVLCGDPKQCGFFNLMQLKVHYNHNICTRVLHKSISRRCTLPVTAIVSTLHYQGKMRTTNRCNTPIQIDTTGSSKPASGDIVLTCFRGWVKQLQIDYRGHEVMTAAASQGLTRKGVYAVRQKVNENPLYSPLSEHVNVLLTRTENRLVWKTLSGDPWIKVLTNVPRGDFSATLEEWHEEHDGIMRVLNERPAEVDPFQNKAKVCWAKCLVQVLETAGIRMTADEWNTILAFREDRAYSPEVALNEICTRYYGVDLDSGLFSAQSVSLFYENNHWDNRPGGRMYGFNHEVARKYAARFPFLRGNMNSGLQLNVPERKLQPFSAECNIVPSNRRLPHALVTSYQQCRGERVEWLLKKIPGHQMLLVSEYNLVIPHKRVFWIAPPRVSGADRTYDLDLGLPMDAGRYDLVFVNIHTEYRQHHYQQCVDHSMRLQMLGGDSLHLLRPGGSLLMRAYGYADRVSEMVVTALARKFSAFRVLRPACVTSNTEVFLLFSNFDNGRRAVTLHQANQKLSSMYACNGLHTAGCAPSYRVRRADISGHSEEAVVNAANAKGTVSDGVCRAVAKKWPSSFKGAATPVGTAKMIRADGMTVIHAVGPNFSTVTEAEGDRELAAAYRAVASIISTNNIKSVAVPLLSTGTFSGGKDRVMQSLNHLFTALDATDADVVIYCRDKNWEKKIQEAIDRRTAIELVSEDVTLETDLVRVHPDSCLVGRNGYSATDGKLYSYLEGTRFHQTAVDMAEISTLWPRLQDANEQICLYALGETMDSIRTKCPVEDADSSTPPKTVPCLCRYAMTAERVARLRMNNTKNIIVCSSFPLPKYRIEGVQKVKCDRVLIFDQTVPSLVSPRKYIQQPPEQLDNVSLTSTTSTGSAWSFPSETTYETMEVVAEVHTEPPIPPPRRRRAAVAQLRQDLEVTEEIEPYVTQQAEIMVMERVATTDIRAIPVPARRAITMPVPAPRVRKVATEPPLEPEAPIPAPRKRRTTSTSPPHNPEDFVPRVPVELPWEPEDLDIQFGDLEPRRRNTRDRDVSTGIQFGDIDFNQSXLGRAGAYIFSSDTGPGHLQQKSVRQHELPCETLYAHEDERIYPPAFDGEKEKVLQAKMQMAPTEANKSRYQSRKVENMKALIVERLREGAKLYLHEQTDKVPTYTSKYPRPVYSPSVDDSLSDPEVAVAACNSFLEENYPTVANYQITDEYDAYLDLVDGSESCLDRATFCPAKLRCYPKHHAYHQPQIRSAVPSPFQNTLQNVLAAATKRNCNVTQMRELPTMDSAVFNVESFKKYACTGEYWQEFKDNPIRITTENITTYVAKLKGPKAAALFAKTHNLVPLQEVPMDRFVMDMKRDVKVTPGTKHTEERPKVQVIQAAEPLATAYLCGIHRELVRRLKAVLTPNIHTLFDMSAEDFDAIIAAHFQPGDAVLETDIASFDKSQDDSLALTALMLLEDLGVDQELLDLIEAAFGEITSVHLPTGTRFKFGAMMKSGMFLTLFINTLLNIVIACRVLRDKLSSSACAAFIGDDNIVHGVRSDPLMAERCASWVNMEVKIIDATMCEKPPYFCGGFILYDSVAGTACRVADPLKRLFKLGKPLPADDNQDEDRRRALKDETVKWSRIGLREELDVALSSRYQVSGVGNITRAMSTLSKSLKSFRKIRGPIIHLYGGPK.

An Alphavirus-like MT domain is found at 27–258; it reads ESQQVTPNDH…ESRKLLRSWH (232 aa). The nsP1 membrane-binding stretch occupies residues 243-262; it reads GSTLYTESRKLLRSWHLPSV. 2 S-palmitoyl cysteine; by host lipidation sites follow: Cys416 and Cys418. In terms of domain architecture, (+)RNA virus helicase ATP-binding spans 689–841; that stretch reads DLINPPFHEF…HNICTRVLHK (153 aa). Residue 720–727 coordinates a ribonucleoside 5'-triphosphate; sequence GVPGSGKS. Positions 842 to 990 constitute a (+)RNA virus helicase C-terminal domain; it reads SISRRCTLPV…LEEWHEEHDG (149 aa). One can recognise a Peptidase C9 domain in the interval 1003-1325; that stretch reads DPFQNKAKVC…QKLSSMYACN (323 aa). A nucleolus localization signal region spans residues 1004–1023; it reads PFQNKAKVCWAKCLVQVLET. Cys1012 functions as the For cysteine protease nsP2 activity in the catalytic mechanism. The short motif at 1056–1065 is the Nuclear export signal element; it reads TRYYGVDLDS. The active-site For cysteine protease nsP2 activity is the His1081. The short motif at 1180–1184 is the Nuclear localization signal element; that stretch reads PHKRV. The 160-residue stretch at 1333 to 1492 folds into the Macro domain; the sequence is APSYRVRRAD…KIQEAIDRRT (160 aa). Residues Asp1342, Asn1356, Gly1364, Gly1444, and Phe1446 each coordinate ADP-D-ribose. The Zn(2+) site is built by Cys1594, Cys1596, Cys1619, and Cys1637. Positions 1768 to 1803 are disordered; that stretch reads KVATEPPLEPEAPIPAPRKRRTTSTSPPHNPEDFVP. Positions 1774–1783 are enriched in pro residues; that stretch reads PLEPEAPIPA. Short sequence motifs (FGDF; binding to host G3BP1) lie at residues 1820–1823 and 1841–1844; these read FGDL and FGDI. Residues 2221-2336 form the RdRp catalytic domain; sequence DAVLETDIAS…HGVRSDPLMA (116 aa).

Interacts with non-structural protein 3. Interacts with RNA-directed RNA polymerase nsP4. Interacts with protease nsP2. interacts with itself. In terms of assembly, interacts with mRNA-capping enzyme nsP1. Interacts with host DDX1. Interacts with host DDX3. Interacts (via C-terminus) with host G3BP1; this interaction inhibits the formation of host stress granules on viral mRNAs and the nsp3-G3BP1 complexes bind viral RNAs and probably orchestrate the assembly of viral replication complexes. Interacts (via C-terminus) with host G3BP2; this interaction inhibits the formation of host stress granules on viral mRNAs and the nsp3-G3BP2 complexes bind viral RNAs and probably orchestrate the assembly of viral replication complexes. As to quaternary structure, interacts with mRNA-capping enzyme nsP1. Interacts with protease nsP2. interacts with itself. Interacts with RNA-directed RNA polymerase nsP4. Interacts with mRNA-capping enzyme nsP1. Interacts with KPNA1/karyopherin-alpha1; this interaction probably allows the active transport of protease nsP2 into the host nucleus. Requires Mg(2+) as cofactor. The cofactor is Mn(2+). In terms of processing, specific enzymatic cleavages in vivo yield mature proteins. The processing of the polyprotein is temporally regulated. In early stages (1.7 hpi), P1234 is first cleaved in trans through its nsP2 protease activity, releasing P123' and nsP4, which associate to form the early replication complex. At the same time, P1234 is also cut at the nsP1/nsP2 site early in infection but with lower efficiency. After replication of the viral minus-strand RNAs (4 hpi), the polyproteins are cut at the nsP1/nsP2 and nsP2/nsP3 sites very efficiently, preventing accumulation of P123' and P1234 and allowing the formation of the late replication complex. NsP3'/nsP4 site is not cleaved anymore and P34 is produced rather than nsP4. Specific enzymatic cleavages in vivo yield mature proteins. The processing of the polyprotein is temporally regulated. In early stages (1.7 hpi), P123 is cleaved at the nsP1/nsP2 site with low efficiency. After replication of the viral minus-strand RNAs (4 hpi), the polyproteins are cut at the nsP1/nsP2 and nsP2/nsP3 sites very efficiently, preventing accumulation of P123 and allowing the formation of the late replication complex. Post-translationally, palmitoylated by host palmitoyltransferases ZDHHC2 and ZDHHC19. In terms of processing, phosphorylated by host on serines and threonines. Ubiquitinated; targets the protein for rapid degradation via the ubiquitin system. Nsp4 is present in extremely low quantities due to low frequency of translation through the amber stop-codon and the degradation by the ubiquitin pathway.

It is found in the host cytoplasmic vesicle membrane. It localises to the host cell membrane. Its subcellular location is the host cell projection. The protein localises to the host filopodium. The protein resides in the host nucleus. It is found in the host cytoplasm. It carries out the reaction GTP + S-adenosyl-L-methionine = N(7)-methyl-GTP + S-adenosyl-L-homocysteine. The enzyme catalyses N(7)-methyl-GTP + L-histidyl-[protein] = N(tele)-(N(7)-methylguanosine 5'-phospho)-L-histidyl-[protein] + diphosphate. The catalysed reaction is N(tele)-(N(7)-methylguanosine 5'-phospho)-L-histidyl-[protein] + a 5'-end diphospho-(purine-ribonucleoside) in mRNA + H(+) = a 5'-end (N(7)-methyl 5'-triphosphoguanosine)-(purine-ribonucleoside) in mRNA + L-histidyl-[protein]. It catalyses the reaction a 5'-end triphospho-ribonucleoside in mRNA + H2O = a 5'-end diphospho-ribonucleoside in mRNA + phosphate + H(+). It carries out the reaction a ribonucleoside 5'-triphosphate + H2O = a ribonucleoside 5'-diphosphate + phosphate + H(+). The enzyme catalyses ATP + H2O = ADP + phosphate + H(+). The catalysed reaction is RNA(n) + a ribonucleoside 5'-triphosphate = RNA(n+1) + diphosphate. It catalyses the reaction RNA(n) + ATP = RNA(n)-3'-adenine ribonucleotide + diphosphate. It carries out the reaction 4-O-(ADP-D-ribosyl)-L-aspartyl-[protein] + H2O = L-aspartyl-[protein] + ADP-D-ribose + H(+). The enzyme catalyses 5-O-(ADP-D-ribosyl)-L-glutamyl-[protein] + H2O = L-glutamyl-[protein] + ADP-D-ribose + H(+). The catalysed reaction is ADP-alpha-D-ribose 1''-phosphate + H2O = ADP-D-ribose + phosphate. Inactive precursor of the viral replicase, which is activated by cleavages carried out by the viral protease nsP2. Functionally, the early replication complex formed by the polyprotein P123 and nsP4 synthesizes minus-strand RNAs. As soon P123 is cleaved into mature proteins, the plus-strand RNAs synthesis begins. In terms of biological role, the early replication complex formed by the polyprotein P123' and nsP4 synthesizes minus-strand RNAs. Polyprotein P123' is a short-lived polyprotein that accumulates during early stage of infection. As soon P123' is cleaved into mature proteins, the plus-strand RNAs synthesis begins. Its function is as follows. Cytoplasmic capping enzyme that catalyzes two virus-specific reactions: methyltransferase and nsP1 guanylyltransferase. mRNA-capping is necessary since all viral RNAs are synthesized in the cytoplasm, and host capping enzymes are restricted to the nucleus. The enzymatic reaction involves a covalent link between 7-methyl-GMP and nsP1, whereas eukaryotic capping enzymes form a covalent complex only with GMP. nsP1 capping consists in the following reactions: GTP is first methylated into 7-methyl-GMP and then is covalently linked to nsP1 to form the m7GMp-nsP1 complex from which 7-methyl-GMP complex is transferred to the mRNA to create the cap structure. NsP1 is needed for the initiation of the minus-strand RNAs synthesis. Probably serves as a membrane anchor for the replication complex composed of nsP1-nsP4. Palmitoylated nsP1 is remodeling host cell cytoskeleton, and induces filopodium-like structure formation at the surface of the host cell. Multifunctional protein whose N-terminus is part of the RNA polymerase complex and displays NTPase, RNA triphosphatase and helicase activities. NTPase and RNA triphosphatase are involved in viral RNA capping and helicase keeps a check on the dsRNA replication intermediates. The C-terminus harbors a protease that specifically cleaves the polyproteins and releases the mature proteins. Required for the shutoff of minus-strand RNAs synthesis. Specifically inhibits the host IFN response by promoting the nuclear export of host STAT1. Also inhibits host transcription by inducing rapid proteasome-dependent degradation of POLR2A, a catalytic subunit of the RNAPII complex. The resulting inhibition of cellular protein synthesis serves to ensure maximal viral gene expression and to evade host immune response. Functionally, seems to be essential for minus-strand RNAs and subgenomic 26S mRNAs synthesis. Displays mono-ADP-ribosylhydrolase activity. ADP-ribosylation is a post-translational modification that controls various processes of the host cell and the virus probably needs to revert it for optimal viral replication. Binds proteins of FXR family and sequesters them into the viral RNA replication complexes thereby inhibiting the formation of host stress granules on viral mRNAs. The nsp3'-FXR complexes bind viral RNAs and probably orchestrate the assembly of viral replication complexes, thanks to the ability of FXR family members to self-assemble and bind DNA. In terms of biological role, seems to be essential for minus-strand RNAs and subgenomic 26S mRNAs synthesis. Displays mono-ADP-ribosylhydrolase activity. ADP-ribosylation is a post-translantional modification that controls various processes of the host cell and the virus probably needs to revert it for optimal viral replication. Binds proteins of G3BP family and sequesters them into the viral RNA replication complexes thereby inhibiting the formation of host stress granules on viral mRNAs. The nsp3-G3BP complexes bind viral RNAs and probably orchestrate the assembly of viral replication complexes, thanks to the ability of G3BP family members to self-assemble and bind DNA. Its function is as follows. RNA dependent RNA polymerase. Replicates genomic and antigenomic RNA by recognizing replications specific signals. The early replication complex formed by the polyprotein P123 and nsP4 synthesizes minus-strand RNAs. The late replication complex composed of fully processed nsP1-nsP4 is responsible for the production of genomic and subgenomic plus-strand RNAs. The core catalytic domain of nsP4 also possesses terminal adenylyltransferase (TATase) activity that is probably involved in maintenance and repair of the poly(A) tail, an element required for replication of the viral genome. The chain is Polyprotein P1234 from Getah virus (GETV).